Reading from the N-terminus, the 493-residue chain is UPF0699 transmembrane protein YdbT (493 aa).

A run of 6 helical transmembrane segments spans residues 18 to 38 (CHTI…VYIV), 46 to 66 (FYGA…SIIK), 188 to 208 (LMAA…FALI), 232 to 252 (IGIY…FSIA), 370 to 390 (VIFS…WGYL), and 393 to 413 (ILLP…AWTI).

Belongs to the UPF0699 family.

The protein localises to the cell membrane. This is UPF0699 transmembrane protein YdbT (ydbT) from Bacillus subtilis (strain 168).